Here is a 391-residue protein sequence, read N- to C-terminus: Mycofactocin maturase MftC (391 aa).

One can recognise a Radical SAM core domain in the interval 16–232 (LDAPICLTWE…KGERVLTGDS (217 aa)). Residues Cys30, Cys34, Cys37, Cys251, Cys258, Cys269, Cys310, Cys313, Cys319, Cys323, and Cys341 each contribute to the [4Fe-4S] cluster site. The disordered stretch occupies residues 340–391 (ECVQGHSEPALARERHLPRPRADHSRGRRVSKPVPLTLSMRPPKRPCNESPV). The span at 350 to 364 (LARERHLPRPRADHS) shows a compositional bias: basic and acidic residues.

Belongs to the radical SAM superfamily. It depends on [4Fe-4S] cluster as a cofactor.

It carries out the reaction [mycofactocin precursor peptide]-C-terminal glycyl-L-valyl-L-tyrosine + S-adenosyl-L-methionine = [mycofactocin precursor peptide]-C-terminal glycyl-N-{[2-(4-hydroxyphenyl)ethenyl]-3-methylbutanamide} + 5'-deoxyadenosine + L-methionine + CO2. The enzyme catalyses [mycofactocin precursor peptide]-C-terminal glycyl-N-{[2-(4-hydroxyphenyl)ethenyl]-3-methylbutanamide} + AH2 + S-adenosyl-L-methionine = [mycofactocin precursor peptide]-C-terminal glycyl-N-{5-[(4-hydroxyphenyl)methyl]-4,4-dimethyl-2-oxopyrrolidin-3-yl}acetamide + 5'-deoxyadenosine + L-methionine + A + H(+). Radical S-adenosylmethionine (SAM) enzyme responsible for the first step of the biosynthesis of the enzyme cofactor mycofactocin (MFT). Catalyzes two reactions at the C-terminus of the mycofactocin precursor (the MftA peptide). The first one is the oxidative decarboxylation of the C-terminal L-tyrosine of MftA, forming an unsaturated tyramine moiety. The second reaction is the cross-linking of the tyramine with the penultimate L-valine residue, forming a five-membered lactam ring. Its activity requires the presence of the MftB chaperone. The chain is Mycofactocin maturase MftC (mftC) from Mycobacterium tuberculosis (strain CDC 1551 / Oshkosh).